The chain runs to 170 residues: Transmembrane protein 252 (170 aa).

2 consecutive transmembrane segments (helical) span residues 8–28 (ILCA…AFFI) and 40–60 (LIAA…GIFW). Residues 112–147 (CPAEREASGIPPPLYTETGLEFQDGNDSHPEAPPSY) form a disordered region.

The protein resides in the membrane. The polypeptide is Transmembrane protein 252 (TMEM252) (Homo sapiens (Human)).